Reading from the N-terminus, the 379-residue chain is Alanine racemase (379 aa).

The active-site Proton acceptor; specific for D-alanine is Lys40. Lys40 is modified (N6-(pyridoxal phosphate)lysine). Substrate is bound at residue Arg138. Tyr267 serves as the catalytic Proton acceptor; specific for L-alanine. Met315 is a substrate binding site.

Belongs to the alanine racemase family. The cofactor is pyridoxal 5'-phosphate.

It carries out the reaction L-alanine = D-alanine. The protein operates within amino-acid biosynthesis; D-alanine biosynthesis; D-alanine from L-alanine: step 1/1. Functionally, catalyzes the interconversion of L-alanine and D-alanine. May also act on other amino acids. The polypeptide is Alanine racemase (alr) (Halothermothrix orenii (strain H 168 / OCM 544 / DSM 9562)).